A 369-amino-acid polypeptide reads, in one-letter code: UDP-N-acetylglucosamine--N-acetylmuramyl-(pentapeptide) pyrophosphoryl-undecaprenol N-acetylglucosamine transferase (369 aa).

UDP-N-acetyl-alpha-D-glucosamine is bound by residues 15-17, N126, R169, S197, and Q299; that span reads TGG.

Belongs to the glycosyltransferase 28 family. MurG subfamily.

Its subcellular location is the cell inner membrane. The catalysed reaction is di-trans,octa-cis-undecaprenyl diphospho-N-acetyl-alpha-D-muramoyl-L-alanyl-D-glutamyl-meso-2,6-diaminopimeloyl-D-alanyl-D-alanine + UDP-N-acetyl-alpha-D-glucosamine = di-trans,octa-cis-undecaprenyl diphospho-[N-acetyl-alpha-D-glucosaminyl-(1-&gt;4)]-N-acetyl-alpha-D-muramoyl-L-alanyl-D-glutamyl-meso-2,6-diaminopimeloyl-D-alanyl-D-alanine + UDP + H(+). The protein operates within cell wall biogenesis; peptidoglycan biosynthesis. Its function is as follows. Cell wall formation. Catalyzes the transfer of a GlcNAc subunit on undecaprenyl-pyrophosphoryl-MurNAc-pentapeptide (lipid intermediate I) to form undecaprenyl-pyrophosphoryl-MurNAc-(pentapeptide)GlcNAc (lipid intermediate II). This is UDP-N-acetylglucosamine--N-acetylmuramyl-(pentapeptide) pyrophosphoryl-undecaprenol N-acetylglucosamine transferase from Methylobacterium radiotolerans (strain ATCC 27329 / DSM 1819 / JCM 2831 / NBRC 15690 / NCIMB 10815 / 0-1).